Consider the following 864-residue polypeptide: DNA mismatch repair protein MutS (864 aa).

Position 607–614 (607–614) interacts with ATP; it reads GPNMGGKS.

This sequence belongs to the DNA mismatch repair MutS family.

In terms of biological role, this protein is involved in the repair of mismatches in DNA. It is possible that it carries out the mismatch recognition step. This protein has a weak ATPase activity. In Neisseria meningitidis serogroup C / serotype 2a (strain ATCC 700532 / DSM 15464 / FAM18), this protein is DNA mismatch repair protein MutS.